A 96-amino-acid polypeptide reads, in one-letter code: DNA-binding protein HmvA (96 aa).

An interaction with DNA region spans residues 52–55 (KTIK).

The protein belongs to the archaeal histone HMF family. As to quaternary structure, homodimer. Dimers then assemble into higher oligomers, with the DNA wrapped around the protein core.

It is found in the cytoplasm. It localises to the chromosome. In terms of biological role, binds and compact DNA (95 to 150 base pairs) to form nucleosome-like structures that contain positive DNA supercoils. Increases the resistance of DNA to thermal denaturation (in vitro). The sequence is that of DNA-binding protein HmvA (hmvA) from Methanocaldococcus jannaschii (strain ATCC 43067 / DSM 2661 / JAL-1 / JCM 10045 / NBRC 100440) (Methanococcus jannaschii).